We begin with the raw amino-acid sequence, 164 residues long: NADH-quinone oxidoreductase subunit B (164 aa).

[4Fe-4S] cluster is bound by residues cysteine 38, cysteine 39, cysteine 104, and cysteine 133.

The protein belongs to the complex I 20 kDa subunit family. NDH-1 is composed of 14 different subunits. Subunits NuoB, C, D, E, F, and G constitute the peripheral sector of the complex. [4Fe-4S] cluster serves as cofactor.

The protein resides in the cell inner membrane. It carries out the reaction a quinone + NADH + 5 H(+)(in) = a quinol + NAD(+) + 4 H(+)(out). In terms of biological role, NDH-1 shuttles electrons from NADH, via FMN and iron-sulfur (Fe-S) centers, to quinones in the respiratory chain. The immediate electron acceptor for the enzyme in this species is believed to be ubiquinone. Couples the redox reaction to proton translocation (for every two electrons transferred, four hydrogen ions are translocated across the cytoplasmic membrane), and thus conserves the redox energy in a proton gradient. This is NADH-quinone oxidoreductase subunit B from Protochlamydia amoebophila (strain UWE25).